Consider the following 380-residue polypeptide: F-box protein At4g18380 (380 aa).

An F-box domain is found at 22–70 (IDHFDNLPDSILLLIFNNIGDVKALGRCSVVSKRFHSLIPQVENVFVRV).

This Arabidopsis thaliana (Mouse-ear cress) protein is F-box protein At4g18380.